The sequence spans 455 residues: Ectonucleoside triphosphate diphosphohydrolase 6 (455 aa).

Topologically, residues 1–12 (MRKIPNHGTLRM) are cytoplasmic. The chain crosses the membrane as a helical span at residues 13 to 32 (TKVAYPLGLCVGLFIYVAYI). The Lumenal segment spans residues 33–455 (KWHRASAAQA…SLKRQKVPAL (423 aa)). Glutamate 196 serves as the catalytic Proton acceptor. 2 disulfide bridges follow: cysteine 297–cysteine 327 and cysteine 387–cysteine 401.

Belongs to the GDA1/CD39 NTPase family. Mg(2+) is required as a cofactor. Requires Ca(2+) as cofactor. In terms of processing, N-glycosylated.

It localises to the golgi apparatus membrane. It is found in the secreted. The protein localises to the cell membrane. It catalyses the reaction a ribonucleoside 5'-diphosphate + H2O = a ribonucleoside 5'-phosphate + phosphate + H(+). It carries out the reaction IDP + H2O = IMP + phosphate + H(+). The enzyme catalyses GDP + H2O = GMP + phosphate + H(+). The catalysed reaction is UDP + H2O = UMP + phosphate + H(+). Functionally, catalyzes the hydrolysis of nucleoside triphosphates and diphosphates in a calcium- or magnesium-dependent manner. Has a strong preference for nucleoside diphosphates, preferentially hydrolyzes GDP, IDP, and UDP, with slower hydrolysis of CDP, ITP, GTP, CTP, ADP, and UTP and virtually no hydrolysis of ATP. The membrane bound form might support glycosylation reactions in the Golgi apparatus and, when released from cells, might catalyze the hydrolysis of extracellular nucleotides. This Mus musculus (Mouse) protein is Ectonucleoside triphosphate diphosphohydrolase 6.